Consider the following 229-residue polypeptide: Flagellar brake protein YcgR (229 aa).

The 85-residue stretch at 134–218 (QLSLRVLDVS…GERALQRYID (85 aa)) folds into the PilZ domain.

The protein belongs to the YcgR family. As to quaternary structure, monomer. Interacts with the flagellar basal bodies.

The protein localises to the bacterial flagellum basal body. Functionally, acts as a flagellar brake, regulating swimming and swarming in a bis-(3'-5') cyclic diguanylic acid (c-di-GMP)-dependent manner. Binds 1 c-di-GMP dimer per subunit. Increasing levels of c-di-GMP lead to decreased motility. The sequence is that of Flagellar brake protein YcgR from Methylibium petroleiphilum (strain ATCC BAA-1232 / LMG 22953 / PM1).